The chain runs to 135 residues: Large ribosomal subunit protein eL32 (135 aa).

It belongs to the eukaryotic ribosomal protein eL32 family.

The sequence is that of Large ribosomal subunit protein eL32 (rpl32e) from Methanococcus maripaludis (strain DSM 14266 / JCM 13030 / NBRC 101832 / S2 / LL).